Here is a 413-residue protein sequence, read N- to C-terminus: Multifunctional CCA protein (413 aa).

ATP-binding residues include glycine 8 and arginine 11. CTP is bound by residues glycine 8 and arginine 11. The Mg(2+) site is built by aspartate 21 and aspartate 23. The ATP site is built by arginine 91, arginine 137, and arginine 140. CTP contacts are provided by arginine 91, arginine 137, and arginine 140. Residues 228–329 form the HD domain; that stretch reads TGVHTLMTLS…VKLFDAIDAW (102 aa).

Belongs to the tRNA nucleotidyltransferase/poly(A) polymerase family. Bacterial CCA-adding enzyme type 1 subfamily. As to quaternary structure, monomer. Can also form homodimers and oligomers. The cofactor is Mg(2+). It depends on Ni(2+) as a cofactor.

It catalyses the reaction a tRNA precursor + 2 CTP + ATP = a tRNA with a 3' CCA end + 3 diphosphate. The enzyme catalyses a tRNA with a 3' CCA end + 2 CTP + ATP = a tRNA with a 3' CCACCA end + 3 diphosphate. Catalyzes the addition and repair of the essential 3'-terminal CCA sequence in tRNAs without using a nucleic acid template. Adds these three nucleotides in the order of C, C, and A to the tRNA nucleotide-73, using CTP and ATP as substrates and producing inorganic pyrophosphate. tRNA 3'-terminal CCA addition is required both for tRNA processing and repair. Also involved in tRNA surveillance by mediating tandem CCA addition to generate a CCACCA at the 3' terminus of unstable tRNAs. While stable tRNAs receive only 3'-terminal CCA, unstable tRNAs are marked with CCACCA and rapidly degraded. In Salmonella typhimurium (strain LT2 / SGSC1412 / ATCC 700720), this protein is Multifunctional CCA protein.